Reading from the N-terminus, the 238-residue chain is ATP-dependent dethiobiotin synthetase BioD (238 aa).

ATP is bound at residue 12 to 17; sequence EVGKTV. A Mg(2+)-binding site is contributed by Thr16. The active site involves Lys37. Thr41 lines the substrate pocket. Residues Asp50, 109–112, 170–171, and 200–202 each bind ATP; these read EGAG, GS, and PAG. Residues Asp50 and Glu109 each coordinate Mg(2+).

The protein belongs to the dethiobiotin synthetase family. Homodimer. Requires Mg(2+) as cofactor.

Its subcellular location is the cytoplasm. The enzyme catalyses (7R,8S)-7,8-diammoniononanoate + CO2 + ATP = (4R,5S)-dethiobiotin + ADP + phosphate + 3 H(+). It participates in cofactor biosynthesis; biotin biosynthesis; biotin from 7,8-diaminononanoate: step 1/2. Catalyzes a mechanistically unusual reaction, the ATP-dependent insertion of CO2 between the N7 and N8 nitrogen atoms of 7,8-diaminopelargonic acid (DAPA, also called 7,8-diammoniononanoate) to form a ureido ring. The sequence is that of ATP-dependent dethiobiotin synthetase BioD from Streptomyces avermitilis (strain ATCC 31267 / DSM 46492 / JCM 5070 / NBRC 14893 / NCIMB 12804 / NRRL 8165 / MA-4680).